The following is a 421-amino-acid chain: Putative hydro-lyase KRH_21160 (421 aa).

Disordered regions lie at residues 200–298 (TWGH…SPVT) and 312–421 (TRAG…AVSR). The span at 224–237 (GSRRRPRWWSRLRR) shows a compositional bias: basic residues. 2 stretches are compositionally biased toward low complexity: residues 243-260 (PRAT…TRCP) and 370-380 (SRGPGPCPRAA).

The protein belongs to the D-glutamate cyclase family.

The polypeptide is Putative hydro-lyase KRH_21160 (Kocuria rhizophila (strain ATCC 9341 / DSM 348 / NBRC 103217 / DC2201)).